A 325-amino-acid chain; its full sequence is Biotin synthase (325 aa).

In terms of domain architecture, Radical SAM core spans 49 to 278 (FNGNIVDLCS…KASIRLAGGR (230 aa)). Cysteine 67, cysteine 71, and cysteine 74 together coordinate [4Fe-4S] cluster. Residues serine 111, cysteine 143, cysteine 203, and arginine 273 each contribute to the [2Fe-2S] cluster site.

It belongs to the radical SAM superfamily. Biotin synthase family. As to quaternary structure, homodimer. [4Fe-4S] cluster serves as cofactor. Requires [2Fe-2S] cluster as cofactor.

It catalyses the reaction (4R,5S)-dethiobiotin + (sulfur carrier)-SH + 2 reduced [2Fe-2S]-[ferredoxin] + 2 S-adenosyl-L-methionine = (sulfur carrier)-H + biotin + 2 5'-deoxyadenosine + 2 L-methionine + 2 oxidized [2Fe-2S]-[ferredoxin]. It functions in the pathway cofactor biosynthesis; biotin biosynthesis; biotin from 7,8-diaminononanoate: step 2/2. Catalyzes the conversion of dethiobiotin (DTB) to biotin by the insertion of a sulfur atom into dethiobiotin via a radical-based mechanism. This is Biotin synthase from Clostridium tetani (strain Massachusetts / E88).